The sequence spans 98 residues: Small ribosomal subunit protein uS19 (98 aa).

Residues 77-98 form a disordered region; that stretch reads TRTYRGHAGGKSEKGGSAPRKK.

This sequence belongs to the universal ribosomal protein uS19 family.

Protein S19 forms a complex with S13 that binds strongly to the 16S ribosomal RNA. In Chlorobium phaeobacteroides (strain BS1), this protein is Small ribosomal subunit protein uS19.